A 636-amino-acid chain; its full sequence is Probable potassium transport system protein Kup (636 aa).

12 consecutive transmembrane segments (helical) span residues 23-43 (MALM…SPLY), 57-77 (PAHV…VVSL), 111-131 (WLLI…SMIT), 148-168 (HTLE…LFAI), 179-199 (LFGP…GYQI), 217-237 (FIAE…LALT), 258-278 (WFAM…ALLL), 287-307 (PFFL…ATVA), 348-368 (IYLP…VLLF), 377-397 (AYGF…FAVL), 409-429 (WMVL…ANIF), and 431-451 (IHEG…LMMT).

It belongs to the HAK/KUP transporter (TC 2.A.72) family.

Its subcellular location is the cell inner membrane. The enzyme catalyses K(+)(in) + H(+)(in) = K(+)(out) + H(+)(out). In terms of biological role, transport of potassium into the cell. Likely operates as a K(+):H(+) symporter. This chain is Probable potassium transport system protein Kup, found in Bordetella bronchiseptica (strain ATCC BAA-588 / NCTC 13252 / RB50) (Alcaligenes bronchisepticus).